The sequence spans 439 residues: 26S proteasome regulatory subunit 4 homolog (439 aa).

The disordered stretch occupies residues 1-46 (MGNNQSQGQGDKGEKKDQPKYQPPPPPTQFGKKKKRRGAETSTKLP). 225-232 (GEPGTGKT) serves as a coordination point for ATP.

The protein belongs to the AAA ATPase family.

The protein localises to the cytoplasm. Its subcellular location is the nucleus. Functionally, the 26S proteasome is involved in the ATP-dependent degradation of ubiquitinated proteins. The regulatory (or ATPase) complex confers ATP dependency and substrate specificity to the 26S complex. Plays an important role in regulating both growth and multicellular development. This Dictyostelium discoideum (Social amoeba) protein is 26S proteasome regulatory subunit 4 homolog (psmC1).